A 200-amino-acid chain; its full sequence is Recombination protein RecR (200 aa).

The C4-type zinc-finger motif lies at 57–72; it reads CRQCRTLTEQELCPQC. Positions 80–175 constitute a Toprim domain; that stretch reads TQLCVVEGPV…TATRIAHGVP (96 aa).

It belongs to the RecR family.

In terms of biological role, may play a role in DNA repair. It seems to be involved in an RecBC-independent recombinational process of DNA repair. It may act with RecF and RecO. In Pseudomonas entomophila (strain L48), this protein is Recombination protein RecR.